The sequence spans 234 residues: Leucyl/phenylalanyl-tRNA--protein transferase (234 aa).

This sequence belongs to the L/F-transferase family.

Its subcellular location is the cytoplasm. The enzyme catalyses N-terminal L-lysyl-[protein] + L-leucyl-tRNA(Leu) = N-terminal L-leucyl-L-lysyl-[protein] + tRNA(Leu) + H(+). It carries out the reaction N-terminal L-arginyl-[protein] + L-leucyl-tRNA(Leu) = N-terminal L-leucyl-L-arginyl-[protein] + tRNA(Leu) + H(+). It catalyses the reaction L-phenylalanyl-tRNA(Phe) + an N-terminal L-alpha-aminoacyl-[protein] = an N-terminal L-phenylalanyl-L-alpha-aminoacyl-[protein] + tRNA(Phe). Its function is as follows. Functions in the N-end rule pathway of protein degradation where it conjugates Leu, Phe and, less efficiently, Met from aminoacyl-tRNAs to the N-termini of proteins containing an N-terminal arginine or lysine. This is Leucyl/phenylalanyl-tRNA--protein transferase from Tolumonas auensis (strain DSM 9187 / NBRC 110442 / TA 4).